The sequence spans 478 residues: Melanopsin (478 aa).

The span at 1–14 (MNPPSGPRVPPSPT) shows a compositional bias: pro residues. Residues 1-32 (MNPPSGPRVPPSPTQEPSCMATPAPPSWWDSS) form a disordered region. Topologically, residues 1–72 (MNPPSGPRVP…VDVPDHAHYT (72 aa)) are extracellular. A helical transmembrane segment spans residues 73-93 (LGTVILLVGLTGMLGNLTVIY). Topologically, residues 94–107 (TFCRSRSLRTPANM) are cytoplasmic. The helical transmembrane segment at 108 to 128 (FIINLAVSDFLMSFTQAPVFF) threads the bilayer. The Extracellular segment spans residues 129 to 144 (TSSLYKQWLFGETGCE). A disulfide bridge links Cys143 with Cys221. Residues 145–165 (FYAFCGALFGISSMITLTAIA) form a helical membrane-spanning segment. The Cytoplasmic segment spans residues 166-188 (LDRYLVITRPLATFGVASKRRAA). A helical transmembrane segment spans residues 189-209 (FVLLGVWLYALAWSLPPFFGW). Residues 210-238 (SAYVPEGLLTSCSWDYMSFTPAVRAYTML) lie on the Extracellular side of the membrane. The chain crosses the membrane as a helical span at residues 239–259 (LCCFVFFLPLLIIIYCYIFIF). At 260–296 (RAIRETGRALQTFGACKGNGESLWQRQRLQSECKMAK) the chain is on the cytoplasmic side. Residues 297 to 317 (IMLLVILLFVLSWAPYSAVAL) traverse the membrane as a helical segment. At 318–332 (VAFAGYAHVLTPYMS) the chain is on the extracellular side. The helical transmembrane segment at 333–353 (SVPAVIAKASAIHNPIIYAIT) threads the bilayer. Position 340 is an N6-(retinylidene)lysine (Lys340). The Cytoplasmic portion of the chain corresponds to 354–478 (HPKYRVAIAQ…GLIPSQDPRM (125 aa)). Positions 440–478 (LYGQGLEDLEAKAPPRPQGHEAETPGKTKGLIPSQDPRM) are disordered. Basic and acidic residues predominate over residues 448-465 (LEAKAPPRPQGHEAETPG).

It belongs to the G-protein coupled receptor 1 family. Opsin subfamily. In terms of tissue distribution, expressed in the retina.

The protein resides in the cell membrane. It localises to the cell projection. The protein localises to the axon. It is found in the dendrite. Its subcellular location is the perikaryon. Photoreceptor that binds cis-retinaldehydes. Contributes to pupillar reflex, photoentrainment and other non-image forming responses to light. May be involved in the optokinetic visual tracking response. May be involved in the regulation of retinal hyaloid vessel growth and regression. This is Melanopsin (OPN4) from Homo sapiens (Human).